The following is a 54-amino-acid chain: Ribulose bisphosphate carboxylase large chain (54 aa).

A propeptide spanning residues 1–2 is cleaved from the precursor; that stretch reads MS. An N-acetylproline modification is found at Pro-3. N6,N6,N6-trimethyllysine is present on Lys-14.

Belongs to the RuBisCO large chain family. Type I subfamily. In terms of assembly, heterohexadecamer of 8 large chains and 8 small chains.

The protein resides in the plastid. Its subcellular location is the chloroplast. The catalysed reaction is 2 (2R)-3-phosphoglycerate + 2 H(+) = D-ribulose 1,5-bisphosphate + CO2 + H2O. It carries out the reaction D-ribulose 1,5-bisphosphate + O2 = 2-phosphoglycolate + (2R)-3-phosphoglycerate + 2 H(+). In terms of biological role, ruBisCO catalyzes two reactions: the carboxylation of D-ribulose 1,5-bisphosphate, the primary event in carbon dioxide fixation, as well as the oxidative fragmentation of the pentose substrate in the photorespiration process. Both reactions occur simultaneously and in competition at the same active site. In Magnolia liliiflora (Mulan magnolia), this protein is Ribulose bisphosphate carboxylase large chain (rbcL).